Consider the following 338-residue polypeptide: Ferrochelatase (338 aa).

Residues H189 and E294 each contribute to the Fe cation site.

Belongs to the ferrochelatase family.

The protein localises to the cytoplasm. The catalysed reaction is heme b + 2 H(+) = protoporphyrin IX + Fe(2+). The protein operates within porphyrin-containing compound metabolism; protoheme biosynthesis; protoheme from protoporphyrin-IX: step 1/1. Functionally, catalyzes the ferrous insertion into protoporphyrin IX. The protein is Ferrochelatase of Pseudomonas putida (strain ATCC 700007 / DSM 6899 / JCM 31910 / BCRC 17059 / LMG 24140 / F1).